The primary structure comprises 176 residues: Nucleoside triphosphate/diphosphate phosphatase (176 aa).

Arginine 23 acts as the Proton donor in catalysis. Asparagine 87, aspartate 103, aspartate 105, aspartate 107, aspartate 120, and glutamate 123 together coordinate Mg(2+).

This sequence belongs to the Ntdp family. Mg(2+) is required as a cofactor.

The enzyme catalyses a ribonucleoside 5'-triphosphate + H2O = a ribonucleoside 5'-diphosphate + phosphate + H(+). The catalysed reaction is a ribonucleoside 5'-diphosphate + H2O = a ribonucleoside 5'-phosphate + phosphate + H(+). Functionally, has nucleoside phosphatase activity towards nucleoside triphosphates and nucleoside diphosphates. The sequence is that of Nucleoside triphosphate/diphosphate phosphatase from Bacillus mycoides (strain KBAB4) (Bacillus weihenstephanensis).